Reading from the N-terminus, the 422-residue chain is Proline-rich protein 22 (422 aa).

Disordered regions lie at residues 1–35 (MQHPKPFCAPAAPQEGFSPQSLEGAEVLGNQPAPT), 306–325 (LCEVPGPALPDSSGGNSADD), and 363–422 (EEQP…ATPH). Residues 383-400 (GKRKASTAKKGKPGRKAR) are compositionally biased toward basic residues. The span at 413–422 (PREDLGATPH) shows a compositional bias: basic and acidic residues.

The protein is Proline-rich protein 22 (PRR22) of Homo sapiens (Human).